We begin with the raw amino-acid sequence, 430 residues long: Solanesyl-diphosphate synthase 1, mitochondrial (430 aa).

A mitochondrion-targeting transit peptide spans 1-31 (MSWRWALARRVAALGATSGGGDGATAQAQRL). 3 residues coordinate isopentenyl diphosphate: Lys-133, Arg-136, and His-182. Residues Asp-189 and Asp-193 each coordinate Mg(2+). Arg-198 contributes to the an all-trans-polyprenyl diphosphate binding site. Arg-199 lines the isopentenyl diphosphate pocket. An all-trans-polyprenyl diphosphate contacts are provided by Lys-275, Thr-276, Gln-313, and Lys-330.

The protein belongs to the FPP/GGPP synthase family. Homodimer. It depends on Mg(2+) as a cofactor. As to expression, expressed in leaves, stems and roots. Highest expression in roots.

Its subcellular location is the mitochondrion. It catalyses the reaction 7 isopentenyl diphosphate + (2E)-geranyl diphosphate = all-trans-nonaprenyl diphosphate + 7 diphosphate. Its pathway is cofactor biosynthesis; ubiquinone biosynthesis. Functionally, involved in the supply of solanesyl diphosphate for ubiquinone-9 (UQ-9) biosynthesis in mitochondria. Farnesyl diphosphate is the preferred substrate. This Oryza sativa subsp. japonica (Rice) protein is Solanesyl-diphosphate synthase 1, mitochondrial.